Consider the following 192-residue polypeptide: Fibroblast growth factor 4B (192 aa).

The signal sequence occupies residues Met1–Cys22.

Belongs to the heparin-binding growth factors family.

The protein resides in the secreted. Functionally, plays an important role in the regulation of embryonic development, cell proliferation, and cell differentiation. Good candidate for an inducing factor with possible roles both in mesoderm induction at the blastula stage and in the formation of the anteroposterior axis at the gastrula stage. The sequence is that of Fibroblast growth factor 4B (fgf4-b) from Xenopus laevis (African clawed frog).